The sequence spans 394 residues: Small RNA 2'-O-methyltransferase (394 aa).

Residues D78 and S114 each coordinate S-adenosyl-L-methionine. Mg(2+) is bound by residues E132, E135, H136, and H181.

This sequence belongs to the methyltransferase superfamily. HEN1 family. It depends on Mg(2+) as a cofactor.

The protein localises to the cytoplasm. The catalysed reaction is small RNA 3'-end nucleotide + S-adenosyl-L-methionine = small RNA 3'-end 2'-O-methylnucleotide + S-adenosyl-L-homocysteine + H(+). In terms of biological role, methyltransferase that adds a 2'-O-methyl group at the 3'-end of piRNAs, a class of 24 to 30 nucleotide RNAs that are generated by a Dicer-independent mechanism and are primarily derived from transposons and other repeated sequence elements. This probably protects the 3'-end of piRNAs from uridylation activity and subsequent degradation. Stabilization of piRNAs is essential for gametogenesis. This is Small RNA 2'-O-methyltransferase (Henmt1) from Rattus norvegicus (Rat).